The chain runs to 236 residues: Probable fimbrial chaperone EcpE (236 aa).

The first 27 residues, 1–27 (MFRRRGVTLTKALLTAVCMLAAPLTQA), serve as a signal peptide directing secretion.

This sequence belongs to the EcpB/EcpE family.

Its function is as follows. Part of the ecpRABCDE operon, which encodes the E.coli common pilus (ECP). ECP is found in both commensal and pathogenic strains and plays a dual role in early-stage biofilm development and host cell recognition. In Escherichia coli O157:H7, this protein is Probable fimbrial chaperone EcpE (ecpE).